Here is a 54-residue protein sequence, read N- to C-terminus: Photosystem II reaction center protein K (54 aa).

Residues 1-17 (MLLEHVTITLLNNTSFA) constitute a propeptide that is removed on maturation. A helical membrane pass occupies residues 29–49 (LIDVLPIIPLLFLLLAFVWQA).

Belongs to the PsbK family. In terms of assembly, PSII is composed of 1 copy each of membrane proteins PsbA, PsbB, PsbC, PsbD, PsbE, PsbF, PsbH, PsbI, PsbJ, PsbK, PsbL, PsbM, PsbT, PsbY, PsbZ, Psb30/Ycf12, at least 3 peripheral proteins of the oxygen-evolving complex and a large number of cofactors. It forms dimeric complexes.

The protein resides in the plastid. Its subcellular location is the chloroplast thylakoid membrane. One of the components of the core complex of photosystem II (PSII). PSII is a light-driven water:plastoquinone oxidoreductase that uses light energy to abstract electrons from H(2)O, generating O(2) and a proton gradient subsequently used for ATP formation. It consists of a core antenna complex that captures photons, and an electron transfer chain that converts photonic excitation into a charge separation. This chain is Photosystem II reaction center protein K, found in Euglena mutabilis.